The chain runs to 299 residues: Probable endonuclease 4 (299 aa).

Positions 68, 110, 145, 179, 182, 214, 227, 229, and 259 each coordinate Zn(2+).

The protein belongs to the AP endonuclease 2 family. Zn(2+) is required as a cofactor.

The enzyme catalyses Endonucleolytic cleavage to 5'-phosphooligonucleotide end-products.. Endonuclease IV plays a role in DNA repair. It cleaves phosphodiester bonds at apurinic or apyrimidinic (AP) sites, generating a 3'-hydroxyl group and a 5'-terminal sugar phosphate. The polypeptide is Probable endonuclease 4 (Exiguobacterium sibiricum (strain DSM 17290 / CCUG 55495 / CIP 109462 / JCM 13490 / 255-15)).